A 107-amino-acid polypeptide reads, in one-letter code: Replication initiation control protein YabA (107 aa).

Zn(2+)-binding residues include H81, C83, C97, and C100.

This sequence belongs to the YabA family. In terms of assembly, homotetramer. Interacts with both DnaA and DnaN, acting as a bridge between these two proteins. It depends on Zn(2+) as a cofactor.

The protein localises to the cytoplasm. It is found in the nucleoid. Functionally, involved in control of chromosome replication initiation. Inhibits the cooperative binding of DnaA to the oriC region, thus negatively regulating initiation of chromosome replication. Inhibits the ability of DnaA-ATP to form a helix on DNA; does not disassemble preformed DnaA-DNA helices. Decreases the residence time of DnaA on the chromosome at its binding sites (oriC, replication forks and promoter-binding sites). Tethers DnaA to the replication machinery via the DNA polymerase beta sliding clamp subunit (dnaN). Associates with oriC and other DnaA targets on the chromosome in a DnaA-dependent manner. In Streptococcus equi subsp. equi (strain 4047), this protein is Replication initiation control protein YabA.